The following is a 283-amino-acid chain: ATP synthase gamma chain (283 aa).

This sequence belongs to the ATPase gamma chain family. F-type ATPases have 2 components, CF(1) - the catalytic core - and CF(0) - the membrane proton channel. CF(1) has five subunits: alpha(3), beta(3), gamma(1), delta(1), epsilon(1). CF(0) has three main subunits: a, b and c.

It localises to the cell inner membrane. In terms of biological role, produces ATP from ADP in the presence of a proton gradient across the membrane. The gamma chain is believed to be important in regulating ATPase activity and the flow of protons through the CF(0) complex. The polypeptide is ATP synthase gamma chain (Ehrlichia ruminantium (strain Welgevonden)).